We begin with the raw amino-acid sequence, 333 residues long: Electron transfer flavoprotein subunit alpha, mitochondrial (333 aa).

Residues 1–19 (MFRAAAPGQLRRAASLLRF) constitute a mitochondrion transit peptide. The domain I stretch occupies residues 20–204 (QSTLVIAEHA…GISEWLDQKL (185 aa)). K59 is modified (N6-acetyllysine; alternate). The residue at position 59 (K59) is an N6-succinyllysine; alternate. Position 62 is an N6-acetyllysine (K62). K69 is modified (N6-acetyllysine; alternate). Position 69 is an N6-succinyllysine; alternate (K69). Residue K75 is modified to N6-acetyllysine. K85 carries the N6-acetyllysine; alternate modification. At K85 the chain carries N6-succinyllysine; alternate. T93 bears the Phosphothreonine mark. K101 and K139 each carry N6-acetyllysine. A Phosphoserine modification is found at S140. K158 is subject to N6-acetyllysine; alternate. K158 is modified (N6-succinyllysine; alternate). At K164 the chain carries N6-acetyllysine. N6-succinyllysine is present on K187. K203 is subject to N6-acetyllysine; alternate. K203 bears the N6-succinyllysine; alternate mark. Positions 205–333 (TKSDRPELTG…PEMTEILKKK (129 aa)) are domain II. K216 carries the post-translational modification N6-succinyllysine. Position 223 (R223) interacts with FAD. 2 positions are modified to N6-acetyllysine; alternate: K226 and K232. N6-succinyllysine; alternate occurs at positions 226 and 232. FAD-binding positions include S248, 263–266 (VGQT), 281–286 (SGAIQH), and N300. N6-succinyllysine is present on K301. 318-319 (DL) lines the FAD pocket.

Belongs to the ETF alpha-subunit/FixB family. As to quaternary structure, heterodimer composed of ETFA and ETFB. Identified in a complex that contains ETFA, ETFB and ETFRF1. Interaction with ETFRF1 promotes dissociation of the bound FAD and loss of electron transfer activity. Interacts with TASOR. FAD serves as cofactor. Expressed in the spermatogonia, spermatocytes, ovary and granular cells within the cerebellum.

The protein localises to the mitochondrion matrix. Functionally, heterodimeric electron transfer flavoprotein that accepts electrons from several mitochondrial dehydrogenases, including acyl-CoA dehydrogenases, glutaryl-CoA and sarcosine dehydrogenase. It transfers the electrons to the main mitochondrial respiratory chain via ETF-ubiquinone oxidoreductase (ETF dehydrogenase). Required for normal mitochondrial fatty acid oxidation and normal amino acid metabolism. The protein is Electron transfer flavoprotein subunit alpha, mitochondrial (Etfa) of Mus musculus (Mouse).